We begin with the raw amino-acid sequence, 448 residues long: Tubulin beta chain (448 aa).

GTP is bound by residues Q11, E69, S138, G142, T143, G144, N204, and N226. E69 serves as a coordination point for Mg(2+). The segment at 429–448 (SISDGEEQPYAEEAAYEAEE) is disordered. Residues 432 to 448 (DGEEQPYAEEAAYEAEE) show a composition bias toward acidic residues.

This sequence belongs to the tubulin family. As to quaternary structure, dimer of alpha and beta chains. A typical microtubule is a hollow water-filled tube with an outer diameter of 25 nm and an inner diameter of 15 nM. Alpha-beta heterodimers associate head-to-tail to form protofilaments running lengthwise along the microtubule wall with the beta-tubulin subunit facing the microtubule plus end conferring a structural polarity. Microtubules usually have 13 protofilaments but different protofilament numbers can be found in some organisms and specialized cells. It depends on Mg(2+) as a cofactor.

The protein localises to the cytoplasm. Its subcellular location is the cytoskeleton. Functionally, tubulin is the major constituent of microtubules, a cylinder consisting of laterally associated linear protofilaments composed of alpha- and beta-tubulin heterodimers. Microtubules grow by the addition of GTP-tubulin dimers to the microtubule end, where a stabilizing cap forms. Below the cap, tubulin dimers are in GDP-bound state, owing to GTPase activity of alpha-tubulin. In Aspergillus fumigatus (strain ATCC MYA-4609 / CBS 101355 / FGSC A1100 / Af293) (Neosartorya fumigata), this protein is Tubulin beta chain.